A 207-amino-acid chain; its full sequence is dTTP/UTP pyrophosphatase (207 aa).

Residue Asp-80 is the Proton acceptor of the active site.

This sequence belongs to the Maf family. YhdE subfamily. A divalent metal cation is required as a cofactor.

The protein resides in the cytoplasm. It carries out the reaction dTTP + H2O = dTMP + diphosphate + H(+). The catalysed reaction is UTP + H2O = UMP + diphosphate + H(+). Nucleoside triphosphate pyrophosphatase that hydrolyzes dTTP and UTP. May have a dual role in cell division arrest and in preventing the incorporation of modified nucleotides into cellular nucleic acids. The protein is dTTP/UTP pyrophosphatase (maf1) of Agrobacterium fabrum (strain C58 / ATCC 33970) (Agrobacterium tumefaciens (strain C58)).